A 173-amino-acid chain; its full sequence is MQTPPVKDGPRINDEIRVPRVLLIDQHGEKQGEMPTASAMEAAEEAGLDLVEIVPNANPPVCKILDYGKFKFQEQKKKNEARKRQKVVELKEIKLRPNIDSHDYDVKAKAMHRFFEEGDKVKVTLRFRGREMAHPELGMKLLQKVKADFDEVAKVEYEPRMEGRQMIMILAPR.

It belongs to the IF-3 family. In terms of assembly, monomer.

Its subcellular location is the cytoplasm. Its function is as follows. IF-3 binds to the 30S ribosomal subunit and shifts the equilibrium between 70S ribosomes and their 50S and 30S subunits in favor of the free subunits, thus enhancing the availability of 30S subunits on which protein synthesis initiation begins. The polypeptide is Translation initiation factor IF-3 (Caulobacter vibrioides (strain ATCC 19089 / CIP 103742 / CB 15) (Caulobacter crescentus)).